A 349-amino-acid chain; its full sequence is 5-deoxyribose 1-phosphate isomerase (349 aa).

Substrate is bound by residues 49–51 (RGA), Arg-92, and Gln-199. Catalysis depends on Asp-240, which acts as the Proton donor. 250-251 (NK) is a binding site for substrate.

This sequence belongs to the EIF-2B alpha/beta/delta subunits family. DrdI subfamily.

The catalysed reaction is 5-deoxy-alpha-D-ribose 1-phosphate = 5-deoxy-D-ribulose 1-phosphate. Its pathway is carbohydrate degradation. Its function is as follows. Catalyzes the isomerization of 5-deoxy-alpha-D-ribose 1-phosphate to 5-deoxy-D-ribulose 1-phosphate, as part of a 5-deoxyribose salvage pathway that recycles this toxic radical SAM enzyme by-product to mainstream metabolites. The polypeptide is 5-deoxyribose 1-phosphate isomerase (Clostridium botulinum (strain ATCC 19397 / Type A)).